Reading from the N-terminus, the 613-residue chain is Dihydroxy-acid dehydratase (613 aa).

Asp81 is a Mg(2+) binding site. Residue Cys122 coordinates [2Fe-2S] cluster. The Mg(2+) site is built by Asp123 and Lys124. N6-carboxylysine is present on Lys124. Cys193 is a binding site for [2Fe-2S] cluster. Glu489 is a Mg(2+) binding site. Ser515 serves as the catalytic Proton acceptor.

This sequence belongs to the IlvD/Edd family. Homodimer. Requires [2Fe-2S] cluster as cofactor. Mg(2+) serves as cofactor.

It catalyses the reaction (2R)-2,3-dihydroxy-3-methylbutanoate = 3-methyl-2-oxobutanoate + H2O. It carries out the reaction (2R,3R)-2,3-dihydroxy-3-methylpentanoate = (S)-3-methyl-2-oxopentanoate + H2O. It functions in the pathway amino-acid biosynthesis; L-isoleucine biosynthesis; L-isoleucine from 2-oxobutanoate: step 3/4. Its pathway is amino-acid biosynthesis; L-valine biosynthesis; L-valine from pyruvate: step 3/4. Its function is as follows. Functions in the biosynthesis of branched-chain amino acids. Catalyzes the dehydration of (2R,3R)-2,3-dihydroxy-3-methylpentanoate (2,3-dihydroxy-3-methylvalerate) into 2-oxo-3-methylpentanoate (2-oxo-3-methylvalerate) and of (2R)-2,3-dihydroxy-3-methylbutanoate (2,3-dihydroxyisovalerate) into 2-oxo-3-methylbutanoate (2-oxoisovalerate), the penultimate precursor to L-isoleucine and L-valine, respectively. In Pseudomonas putida (strain ATCC 700007 / DSM 6899 / JCM 31910 / BCRC 17059 / LMG 24140 / F1), this protein is Dihydroxy-acid dehydratase.